A 185-amino-acid chain; its full sequence is MLKAKILFVGPCESGKTVLANFLTESSDITEYSPTQGVRILEFENPHVTSNNKGTGCEFELWDCGGDAKFESCWPALMKDAHGVVIVFNADIPSHRKEMEMWYSCFVQQQSLQDTQCMLIAHHKPGSGDDKGSLSLSPPLNKLKLVHSNLEDDPEEIRMEFIKYLKSIINSMSESRDREEMSIMT.

GTP-binding positions include 10 to 17 (GPCESGKT), 63 to 67 (DCGGD), and 123 to 126 (HKPG). At Ser-137 the chain carries Phosphoserine.

It belongs to the small GTPase superfamily. Rab family. Component of the IFT complex B, at least composed of IFT20, IFT22, IFT25, IFT27, IFT46, IFT52, TRAF3IP1/IFT54, IFT57, IFT74, IFT80, IFT81, and IFT88. Interacts with IFT88. Interacts with CFAP61.

Its subcellular location is the cell projection. It is found in the cilium. Small GTPase-like component of the intraflagellar transport (IFT) complex B. This chain is Intraflagellar transport protein 22 homolog (IFT22), found in Macaca fascicularis (Crab-eating macaque).